We begin with the raw amino-acid sequence, 75 residues long: UPF0154 protein MYPE400 (75 aa).

Residues 5-27 (IGLCLGLGIPISLIIGAVIGYYF) form a helical membrane-spanning segment.

The protein belongs to the UPF0154 family.

Its subcellular location is the membrane. The sequence is that of UPF0154 protein MYPE400 from Malacoplasma penetrans (strain HF-2) (Mycoplasma penetrans).